We begin with the raw amino-acid sequence, 673 residues long: Cell division cycle protein 23 homolog (673 aa).

TPR repeat units follow at residues 86-120, 159-195, 232-267, 332-365, 400-433, 434-467, 469-501, 502-535, 539-572, and 577-610; these read AEMWTNEILAHLPDKWCAPNTLNLYNQVSELVLDN, NKEFRRAAFFLEKTMNGNKLDHFLHFRCLFLAYYQEH, EDVWFEYLMGLLEVELGLKDLAEKSFRNVVIREPRI, PMIITKIAACSNARHDHDQAISNFEDVRKADPYR, WETCCIVANYHAIRRDSEHAIKFFQRALRLNPGL, AALWVLIGHEFMEMKNNAAACVSYRRAIEIDPAD, RGWYGLGQMYDIMKMPAYALFYYQEAQKCKPHD, SRLLVALGDIYSKLNRIEDAEKCFTGAYLFGDVE, LWSLAKLHERYSDDNKAAQAFEVFLVVYELVTSA, and IYAIAFLANHFFKIEDFDKASEYATKCLAFETLC. The tract at residues 628–673 is disordered; sequence SRLPVEEAPGPSNASAAGGQEAMDTEEAPQEGGEEEMSEGEDDFSF. Residues 635–646 show a composition bias toward low complexity; the sequence is APGPSNASAAGG. The segment covering 650–673 has biased composition (acidic residues); that stretch reads MDTEEAPQEGGEEEMSEGEDDFSF.

It belongs to the APC8/CDC23 family. As to quaternary structure, the APC/C complex is probably composed of at least 12 subunits: apc-2, apc-10, apc-11, cdc-26, emb-1, emb-27, emb-30, mat-1, mat-2, mat-3, such-1 and gfi-3.

The protein operates within protein modification; protein ubiquitination. In terms of biological role, probable component of the anaphase promoting complex/cyclosome (APC/C), a cell cycle-regulated E3 ubiquitin ligase that controls progression through mitosis and the G1 phase of the cell cycle. The APC/C complex acts by mediating ubiquitination and subsequent degradation of target proteins. Developmental role in early embryogenesis and the metaphase to anaphase transition in oocyte and spermatocyte meiosis and mitosis in germ cells. Required for embryonic anterior-posterior axis formation. Plays a role in regulating the abundance of glr-1 receptors in postmitotic neurons, which may in turn control animal locomotion. Involved in regulating GABA neurotransmitter release at neuromuscular junctions in GABA motor neurons. This is Cell division cycle protein 23 homolog from Caenorhabditis elegans.